Reading from the N-terminus, the 703-residue chain is Fatty acid oxidation complex subunit alpha (703 aa).

Residues 1-190 are enoyl-CoA hydratase; the sequence is MSEQKAFSLN…KLGVVDACVP (190 aa). Positions 308 to 703 are 3-hydroxyacyl-CoA dehydrogenase; that stretch reads AAVKKVGVLG…TRAGEGRTFY (396 aa).

In the N-terminal section; belongs to the enoyl-CoA hydratase/isomerase family. The protein in the central section; belongs to the 3-hydroxyacyl-CoA dehydrogenase family. As to quaternary structure, heterotetramer of two alpha chains (FadJ) and two beta chains (FadI).

It localises to the cytoplasm. It carries out the reaction a (3S)-3-hydroxyacyl-CoA = a (2E)-enoyl-CoA + H2O. The catalysed reaction is a 4-saturated-(3S)-3-hydroxyacyl-CoA = a (3E)-enoyl-CoA + H2O. It catalyses the reaction a (3S)-3-hydroxyacyl-CoA + NAD(+) = a 3-oxoacyl-CoA + NADH + H(+). The enzyme catalyses (3S)-3-hydroxybutanoyl-CoA = (3R)-3-hydroxybutanoyl-CoA. It functions in the pathway lipid metabolism; fatty acid beta-oxidation. Catalyzes the formation of a hydroxyacyl-CoA by addition of water on enoyl-CoA. Also exhibits 3-hydroxyacyl-CoA epimerase and 3-hydroxyacyl-CoA dehydrogenase activities. The sequence is that of Fatty acid oxidation complex subunit alpha from Vibrio parahaemolyticus serotype O3:K6 (strain RIMD 2210633).